The sequence spans 406 residues: Phosphopentomutase (406 aa).

6 residues coordinate Mn(2+): Asp10, Asp305, His310, Asp346, His347, and His358.

Belongs to the phosphopentomutase family. The cofactor is Mn(2+).

The protein resides in the cytoplasm. It carries out the reaction 2-deoxy-alpha-D-ribose 1-phosphate = 2-deoxy-D-ribose 5-phosphate. The catalysed reaction is alpha-D-ribose 1-phosphate = D-ribose 5-phosphate. The protein operates within carbohydrate degradation; 2-deoxy-D-ribose 1-phosphate degradation; D-glyceraldehyde 3-phosphate and acetaldehyde from 2-deoxy-alpha-D-ribose 1-phosphate: step 1/2. Functionally, isomerase that catalyzes the conversion of deoxy-ribose 1-phosphate (dRib-1-P) and ribose 1-phosphate (Rib-1-P) to deoxy-ribose 5-phosphate (dRib-5-P) and ribose 5-phosphate (Rib-5-P), respectively. The chain is Phosphopentomutase from Rhizobium rhizogenes (strain K84 / ATCC BAA-868) (Agrobacterium radiobacter).